A 1143-amino-acid chain; its full sequence is Disease resistance protein Pik-1 (1143 aa).

The segment at 1-190 is structured coiled coil (CC) domain; it reads MEAAAMAVTA…PLRIMGGEMQ (190 aa). An HMA domain is found at 189-258; it reads MQKIVFKIPM…KVGHAELLQV (70 aa). The segment at 191–264 is HMA-like domain; it reads KIVFKIPMVD…LLQVSQVKED (74 aa). The region spanning 282-570 is the NB-ARC domain; it reads HEVKTICILG…WIAEGFVSEE (289 aa). 10 LRR repeats span residues 681-706, 708-731, 732-754, 756-777, 778-800, 802-823, 824-848, 945-968, 979-1002, and 1004-1027; these read FKRL…ICEQ, SLRV…MRKL, KHLE…IGEL, HLRI…IREL, QHLH…VGKL, NLKI…IGEL, NHLQ…QISQ, MPNL…INGT, DSRL…EFKF, and AGPA…VFRC.

This sequence belongs to the disease resistance NB-LRR family. As to quaternary structure, interacts with AVR-Pik through its N-terminal part containing the HMA-like domain.

Disease resistance (R) protein that specifically recognizes the AVR-Pik effector avirulence protein from M.oryzae. Resistance proteins guard the plant against pathogens that contain an appropriate avirulence protein via an indirect interaction with this avirulence protein. That triggers a defense system including the hypersensitive response, which restricts the pathogen growth. Contribution of Pik-2 is required to recognize the effector avirulence protein AVR-Pik. The protein is Disease resistance protein Pik-1 of Oryza sativa subsp. japonica (Rice).